The chain runs to 537 residues: Exodeoxyribonuclease 7 large subunit (537 aa).

The disordered stretch occupies residues 508–537 (GEGAPVEPPQAARPSKGARTKAAQPSLFDD).

It belongs to the XseA family. In terms of assembly, heterooligomer composed of large and small subunits.

The protein localises to the cytoplasm. The enzyme catalyses Exonucleolytic cleavage in either 5'- to 3'- or 3'- to 5'-direction to yield nucleoside 5'-phosphates.. In terms of biological role, bidirectionally degrades single-stranded DNA into large acid-insoluble oligonucleotides, which are then degraded further into small acid-soluble oligonucleotides. The sequence is that of Exodeoxyribonuclease 7 large subunit from Azorhizobium caulinodans (strain ATCC 43989 / DSM 5975 / JCM 20966 / LMG 6465 / NBRC 14845 / NCIMB 13405 / ORS 571).